The chain runs to 628 residues: MVSKLSQLQTELLAALLESGLSKEALIQALGEPGPYLMVGDGPLDKGESCGGTRGDLTELPNGLGETRGSEDDTDDDGEDFAPPILKELENLSPEEAAHQKAVVESLLQEDPWRVAKMVKSYLQQHNIPQREVVDTTGLNQSHLSQHLNKGTPMKTQKRAALYTWYVRKQREVAQQFTHAGQGGLIEEPTGDELPTKKGRRNRFKWGPASQQILFQAYERQKNPSKEERETLVEECNRAECIQRGVSPSQAQGLGSNLVTEVRVYNWFANRRKEEAFRHKLAMDTYNGPPPGPGPGPALPAHSSPGLPTTTLSPSKVHGVRYGQSATSEAAEVPSSSGGPLVTVSAALHQVSPTGLEPSSLLSTEAKLVSATGGPLPPVSTLTALHSLEQTSPGLNQQPQNLIMASLPGVMTIGPGEPASLGPTFTNTGASTLVIGLASTQAQSVPVINSMGSSLTTLQPVQFSQPLHPSYQQPLMPPVQSHVAQSPFMATMAQLQSPHALYSHKPEVAQYTHTSLLPQTMLITDTNLSTLASLTPTKQVFTSDTEASSEPGLHEPSSPATTIHIPSQDPSNIQHLQPAHRLSTSPTVSSSSLVLYQSSDSNGHSHLLPSNHGVIETFISTQMASSSQ.

The segment at 1–31 is dimerization; sequence MVSKLSQLQTELLAALLESGLSKEALIQALG. One can recognise an HNF-p1 domain in the interval 1–32; the sequence is MVSKLSQLQTELLAALLESGLSKEALIQALGE. The interval 47–79 is disordered; the sequence is GESCGGTRGDLTELPNGLGETRGSEDDTDDDGE. Residue S70 is modified to Phosphoserine. T74 carries the post-translational modification Phosphothreonine. The 96-residue stretch at 87 to 182 folds into the POU-specific atypical domain; that stretch reads KELENLSPEE…VAQQFTHAGQ (96 aa). The residue at position 93 (S93) is a Phosphoserine. K117 participates in a covalent cross-link: Glycyl lysine isopeptide (Lys-Gly) (interchain with G-Cter in ubiquitin). 4 interaction with DNA regions span residues 130 to 132, 143 to 149, 155 to 158, and 203 to 206; these read QRE, HLSQHLN, KTQK, and RFKW. The segment at 183 to 205 is disordered; sequence GGLIEEPTGDELPTKKGRRNRFK. A Nuclear localization signal motif is present at residues 197-205; sequence KKGRRNRFK. Positions 199-279 form a DNA-binding region, homeobox; HNF1-type; that stretch reads GRRNRFKWGP…NRRKEEAFRH (81 aa). S247 is modified (phosphoserine). Interaction with DNA stretches follow at residues 263–265 and 270–273; these read RVY and NRRK. Disordered regions lie at residues 284–338 and 541–585; these read DTYN…SSSG and FTSD…LSTS. A compositionally biased stretch (pro residues) spans 288–298; that stretch reads GPPPGPGPGPA. S313 carries the phosphoserine modification. Polar residues-rich tracts occupy residues 324–338 and 558–575; these read QSATSEAAEVPSSSG and SPATTIHIPSQDPSNIQH.

Belongs to the HNF1 homeobox family. In terms of assembly, binds DNA as a dimer. Heterotetramer with PCBD1; formed by a dimer of dimers. Interacts with PCBD1. Interacts with BHLHE41. Interacts with NR5A2. Interacts with SPOP; this interaction promotes ubiquitination and degradation of HNF1A. Ubiquitinated in s SPOP-dependent manner; leading to prteasomal degradation. Liver.

Its subcellular location is the nucleus. Its function is as follows. Transcriptional activator that regulates the tissue specific expression of multiple genes, especially in pancreatic islet cells and in liver. Binds to the inverted palindrome 5'-GTTAATNATTAAC-3'. Activates the transcription of CYP1A2, CYP2E1 and CYP3A11. The protein is Hepatocyte nuclear factor 1-alpha (Hnf1a) of Rattus norvegicus (Rat).